Here is a 226-residue protein sequence, read N- to C-terminus: Protein GrpE (226 aa).

Disordered stretches follow at residues 1–31 and 189–226; these read MTPN…PDTL and VSKG…PAEA. A compositionally biased stretch (low complexity) spans 192–218; sequence GGPKAAEASKPAGEAPKPAGEAPKPAG.

The protein belongs to the GrpE family. As to quaternary structure, homodimer.

The protein resides in the cytoplasm. Its function is as follows. Participates actively in the response to hyperosmotic and heat shock by preventing the aggregation of stress-denatured proteins, in association with DnaK and GrpE. It is the nucleotide exchange factor for DnaK and may function as a thermosensor. Unfolded proteins bind initially to DnaJ; upon interaction with the DnaJ-bound protein, DnaK hydrolyzes its bound ATP, resulting in the formation of a stable complex. GrpE releases ADP from DnaK; ATP binding to DnaK triggers the release of the substrate protein, thus completing the reaction cycle. Several rounds of ATP-dependent interactions between DnaJ, DnaK and GrpE are required for fully efficient folding. This Methylobacterium nodulans (strain LMG 21967 / CNCM I-2342 / ORS 2060) protein is Protein GrpE.